A 291-amino-acid polypeptide reads, in one-letter code: Serine hydrolase BPHL (291 aa).

The signal sequence occupies residues 1-37; the sequence is MVAVLGGRGVLRLRLLLSALKPGIHVPRAGPAAAFGT. Residues 62–181 form the AB hydrolase-1 domain; sequence AVLLLPGMLG…DSMIYEGIRD (120 aa). An N6-acetyllysine mark is found at lysine 86 and lysine 119. Position 126 is an N6-acetyllysine; alternate (lysine 126). N6-succinyllysine; alternate is present on lysine 126. The Nucleophile role is filled by serine 139. An N6-succinyllysine modification is found at lysine 184. At lysine 191 the chain carries N6-acetyllysine; alternate. Residue lysine 191 is modified to N6-succinyllysine; alternate. Lysine 217 is modified (N6-acetyllysine). Aspartate 221 provides a ligand contact to Mg(2+). Lysine 243 carries the N6-acetyllysine modification. Catalysis depends on aspartate 244, which acts as the Charge relay system. An N6-acetyllysine; alternate mark is found at lysine 260 and lysine 271. 2 positions are modified to N6-succinyllysine; alternate: lysine 260 and lysine 271. Histidine 272 acts as the Charge relay system in catalysis.

The protein belongs to the AB hydrolase superfamily. Lipase family. Monomer. May also form homodimers. Expressed at high levels in liver and kidney and lower levels in heart, intestine and skeletal muscle.

Its subcellular location is the mitochondrion. It catalyses the reaction L-homocysteine thiolactone + H2O = L-homocysteine + H(+). The catalysed reaction is valacyclovir + H2O = acyclovir + L-valine + H(+). Its function is as follows. Specific alpha-amino acid ester serine hydrolase that prefers small, hydrophobic, and aromatic side chains and does not have a stringent requirement for the leaving group other than preferring a primary alcohol. Has homocysteine-thiolactonase activity (in vitro) and may play a significant role in the detoxification of homocysteine thiolactone in vivo. Catalyzes the hydrolytic activation of amino acid ester prodrugs of nucleoside analogs such as valacyclovir and valganciclovir, converting them into their active forms (acyclovir and ganciclovir). This Homo sapiens (Human) protein is Serine hydrolase BPHL (BPHL).